We begin with the raw amino-acid sequence, 181 residues long: Translation initiation factor IF-3, chloroplastic (181 aa).

Belongs to the IF-3 family. As to quaternary structure, monomer.

The protein localises to the plastid. The protein resides in the chloroplast. IF-3 binds to the 30S ribosomal subunit and shifts the equilibrium between 70S ribosomes and their 50S and 30S subunits in favor of the free subunits, thus enhancing the availability of 30S subunits on which protein synthesis initiation begins. The polypeptide is Translation initiation factor IF-3, chloroplastic (Gracilaria tenuistipitata var. liui (Red alga)).